We begin with the raw amino-acid sequence, 378 residues long: Dual-specificity RNA methyltransferase RlmN (378 aa).

The Proton acceptor role is filled by Glu-95. The region spanning 101-345 (EETRGTLCVS…TTIRKTRGDD (245 aa)) is the Radical SAM core domain. A disulfide bridge connects residues Cys-108 and Cys-350. Residues Cys-115, Cys-119, and Cys-122 each coordinate [4Fe-4S] cluster. Residues 176-177 (GE), Ser-208, 230-232 (SLH), and Asn-307 contribute to the S-adenosyl-L-methionine site. Cys-350 serves as the catalytic S-methylcysteine intermediate.

The protein belongs to the radical SAM superfamily. RlmN family. Requires [4Fe-4S] cluster as cofactor.

Its subcellular location is the cytoplasm. It carries out the reaction adenosine(2503) in 23S rRNA + 2 reduced [2Fe-2S]-[ferredoxin] + 2 S-adenosyl-L-methionine = 2-methyladenosine(2503) in 23S rRNA + 5'-deoxyadenosine + L-methionine + 2 oxidized [2Fe-2S]-[ferredoxin] + S-adenosyl-L-homocysteine. It catalyses the reaction adenosine(37) in tRNA + 2 reduced [2Fe-2S]-[ferredoxin] + 2 S-adenosyl-L-methionine = 2-methyladenosine(37) in tRNA + 5'-deoxyadenosine + L-methionine + 2 oxidized [2Fe-2S]-[ferredoxin] + S-adenosyl-L-homocysteine. In terms of biological role, specifically methylates position 2 of adenine 2503 in 23S rRNA and position 2 of adenine 37 in tRNAs. m2A2503 modification seems to play a crucial role in the proofreading step occurring at the peptidyl transferase center and thus would serve to optimize ribosomal fidelity. This is Dual-specificity RNA methyltransferase RlmN from Burkholderia pseudomallei (strain K96243).